Here is a 493-residue protein sequence, read N- to C-terminus: Mitochondrial distribution and morphology protein 10 (493 aa).

The protein belongs to the MDM10 family. Component of the ER-mitochondria encounter structure (ERMES) or MDM complex, composed of MMM1, MDM10, MDM12 and MDM34. Associates with the mitochondrial outer membrane sorting assembly machinery SAM(core) complex, which consists of SAM35, SAM37 and SAM50, to form a SAM(holo) complex.

The protein localises to the mitochondrion outer membrane. Component of the ERMES/MDM complex, which serves as a molecular tether to connect the endoplasmic reticulum and mitochondria. Components of this complex are involved in the control of mitochondrial shape and protein biogenesis and may function in phospholipid exchange. MDM10 is involved in the late assembly steps of the general translocase of the mitochondrial outer membrane (TOM complex). Functions in the TOM40-specific route of the assembly of outer membrane beta-barrel proteins, including the association of TOM40 with the receptor TOM22 and small TOM proteins. Can associate with the SAM(core) complex as well as the MDM12-MMM1 complex, both involved in late steps of the major beta-barrel assembly pathway, that is responsible for biogenesis of all outer membrane beta-barrel proteins. May act as a switch that shuttles between both complexes and channels precursor proteins into the TOM40-specific pathway. Plays a role in mitochondrial morphology and in the inheritance of mitochondria. The protein is Mitochondrial distribution and morphology protein 10 of Saccharomyces cerevisiae (strain ATCC 204508 / S288c) (Baker's yeast).